The following is a 101-amino-acid chain: Small ribosomal subunit protein uS10 (101 aa).

The protein belongs to the universal ribosomal protein uS10 family. In terms of assembly, part of the 30S ribosomal subunit.

Its function is as follows. Involved in the binding of tRNA to the ribosomes. The sequence is that of Small ribosomal subunit protein uS10 from Brachyspira hyodysenteriae (Treponema hyodysenteriae).